Consider the following 361-residue polypeptide: Caspase activity and apoptosis inhibitor 1 (361 aa).

Basic residues predominate over residues 1–14; sequence MTGKKSSREKRRKR. Disordered stretches follow at residues 1 to 28 and 67 to 100; these read MTGK…APDI and GGSG…GSLQ. Positions 19–28 are enriched in low complexity; sequence AAAALAAPDI. Ser89 is modified (phosphoserine). Thr90 is subject to Phosphothreonine. Residue Lys104 forms a Glycyl lysine isopeptide (Lys-Gly) (interchain with G-Cter in SUMO2) linkage. Ser120 and Ser203 each carry phosphoserine. Disordered stretches follow at residues 198–218 and 230–331; these read DNGM…MGSD and ASSV…DVQP. Positions 199–210 are enriched in acidic residues; it reads NGMDSDMEEEAD. Basic and acidic residues predominate over residues 234–251; that stretch reads RENKQPEGLELKQGKGED. A compositionally biased stretch (low complexity) spans 272-281; sequence EEAAAPEAPE. Residues 281 to 311 adopt a coiled-coil conformation; sequence ENTVQSEAGQIDDLEKDIEKSVNEILGLAES. Ser312 is subject to Phosphoserine.

As to expression, ubiquitous.

Functionally, anti-apoptotic protein that modulates a caspase-10 dependent mitochondrial caspase-3/9 feedback amplification loop. The sequence is that of Caspase activity and apoptosis inhibitor 1 (CAAP1) from Homo sapiens (Human).